Here is a 124-residue protein sequence, read N- to C-terminus: Flowering-promoting factor 1-like protein 1 (124 aa).

The segment at 19–42 (PYNQSAGDSSESSSSGGNQQQRMR) is disordered. Residues 22 to 39 (QSAGDSSESSSSGGNQQQ) are compositionally biased toward low complexity.

This sequence belongs to the FPF1 family. In terms of tissue distribution, expressed in roots, flowers, and at a low level, in leaves.

Its function is as follows. Modulates the competence to flowering of apical meristems. This is Flowering-promoting factor 1-like protein 1 (FLP1) from Arabidopsis thaliana (Mouse-ear cress).